The chain runs to 60 residues: Large ribosomal subunit protein uL30 (60 aa).

This sequence belongs to the universal ribosomal protein uL30 family. Part of the 50S ribosomal subunit.

This Streptococcus mutans serotype c (strain ATCC 700610 / UA159) protein is Large ribosomal subunit protein uL30.